A 136-amino-acid polypeptide reads, in one-letter code: Large ribosomal subunit protein uL16 (136 aa).

This sequence belongs to the universal ribosomal protein uL16 family. Part of the 50S ribosomal subunit.

Binds 23S rRNA and is also seen to make contacts with the A and possibly P site tRNAs. The sequence is that of Large ribosomal subunit protein uL16 from Actinobacillus pleuropneumoniae serotype 5b (strain L20).